Here is a 224-residue protein sequence, read N- to C-terminus: Glutathione S-transferase U8 (224 aa).

Positions 5 to 85 (EHVKLLGLWG…YIEDTWKTTH (81 aa)) constitute a GST N-terminal domain. Residues 15–16 (SP), 42–43 (NR), 56–57 (KV), and 69–70 (ES) each bind glutathione. In terms of domain architecture, GST C-terminal spans 91–213 (DPYERAMARF…LPPKEKLVAV (123 aa)). Threonine 152 is modified (phosphothreonine).

It belongs to the GST superfamily. Tau family.

The protein resides in the cytoplasm. It localises to the cytosol. The enzyme catalyses RX + glutathione = an S-substituted glutathione + a halide anion + H(+). Functionally, may be involved in the conjugation of reduced glutathione to a wide number of exogenous and endogenous hydrophobic electrophiles and have a detoxification role against certain herbicides. This Arabidopsis thaliana (Mouse-ear cress) protein is Glutathione S-transferase U8 (GSTU8).